Reading from the N-terminus, the 414-residue chain is HERV-H LTR-associating protein 2 (414 aa).

Residues Met-1 to Gly-22 form the signal peptide. An Ig-like V-type 1 domain is found at Ile-61–Thr-131. N-linked (GlcNAc...) asparagine glycosylation is found at Asn-90 and Asn-103. The Ig-like C1-type domain maps to Val-138–Thr-222. Disulfide bonds link Cys-159-Cys-210 and Cys-243-Cys-317. Positions Gln-235–Thr-328 constitute an Ig-like V-type 2 domain. Residue Asn-318 is glycosylated (N-linked (GlcNAc...) asparagine). Residues Lys-345–Val-365 form a helical membrane-spanning segment. Residues Gly-383–Val-414 form a disordered region.

Interacts with TMIGD2. Expressed at high levels in colon, kidney, testis, lung and pancreas, and at lower levels in small intestine, liver and skeletal muscle. In immune cells, highly expressed in B-cells, dendritic cells and macrophages. Not detected in T-cells.

It localises to the membrane. In terms of biological role, through interaction with TMIGD2, costimulates T-cells in the context of TCR-mediated activation. Enhances T-cell proliferation and cytokine production via an AKT-dependent signaling cascade. In Homo sapiens (Human), this protein is HERV-H LTR-associating protein 2 (HHLA2).